Consider the following 106-residue polypeptide: Phosphoribosyl-ATP pyrophosphatase (106 aa).

The protein belongs to the PRA-PH family.

The protein localises to the cytoplasm. The catalysed reaction is 1-(5-phospho-beta-D-ribosyl)-ATP + H2O = 1-(5-phospho-beta-D-ribosyl)-5'-AMP + diphosphate + H(+). The protein operates within amino-acid biosynthesis; L-histidine biosynthesis; L-histidine from 5-phospho-alpha-D-ribose 1-diphosphate: step 2/9. This chain is Phosphoribosyl-ATP pyrophosphatase, found in Rhizorhabdus wittichii (strain DSM 6014 / CCUG 31198 / JCM 15750 / NBRC 105917 / EY 4224 / RW1) (Sphingomonas wittichii).